Reading from the N-terminus, the 196-residue chain is Probable malonic semialdehyde reductase RutE (196 aa).

Belongs to the nitroreductase family. HadB/RutE subfamily. FMN is required as a cofactor.

The enzyme catalyses 3-hydroxypropanoate + NADP(+) = 3-oxopropanoate + NADPH + H(+). Functionally, may reduce toxic product malonic semialdehyde to 3-hydroxypropionic acid, which is excreted. In Yersinia enterocolitica serotype O:8 / biotype 1B (strain NCTC 13174 / 8081), this protein is Probable malonic semialdehyde reductase RutE.